Reading from the N-terminus, the 211-residue chain is High frequency lysogenization protein HflD homolog (211 aa).

It belongs to the HflD family.

It is found in the cytoplasm. The protein localises to the cell membrane. This Buchnera aphidicola subsp. Acyrthosiphon pisum (strain 5A) protein is High frequency lysogenization protein HflD homolog.